A 235-amino-acid chain; its full sequence is Small ribosomal subunit protein uS2c (235 aa).

This sequence belongs to the universal ribosomal protein uS2 family.

The protein resides in the plastid. This chain is Small ribosomal subunit protein uS2c (rps2), found in Euglena longa (Euglenophycean alga).